A 469-amino-acid polypeptide reads, in one-letter code: Glutamine synthetase (469 aa).

The region spanning 12–97 (HDVKWVDLRF…LVCDIIEPST (86 aa)) is the GS beta-grasp domain. The region spanning 105–469 (PRNIAKRAEE…PLEYDLYYSV (365 aa)) is the GS catalytic domain. Residues E130 and E132 each coordinate Mg(2+). Residue E208 coordinates ATP. Residues E213 and E221 each coordinate Mg(2+). L-glutamate-binding positions include 265–266 (NG) and G266. H270 is a binding site for Mg(2+). Residues 272-274 (HMS) and S274 each bind ATP. 3 residues coordinate L-glutamate: R322, E328, and R340. ATP is bound by residues R340, R345, and K353. A Mg(2+)-binding site is contributed by E358. R360 provides a ligand contact to L-glutamate. Y398 is modified (O-AMP-tyrosine).

The protein belongs to the glutamine synthetase family. Oligomer of 12 subunits arranged in the form of two hexameric ring. Requires Mg(2+) as cofactor.

The protein localises to the cytoplasm. The enzyme catalyses L-glutamate + NH4(+) + ATP = L-glutamine + ADP + phosphate + H(+). With respect to regulation, the activity of this enzyme could be controlled by adenylation under conditions of abundant glutamine. Functionally, catalyzes the ATP-dependent biosynthesis of glutamine from glutamate and ammonia. The polypeptide is Glutamine synthetase (Pseudomonas aeruginosa (strain ATCC 15692 / DSM 22644 / CIP 104116 / JCM 14847 / LMG 12228 / 1C / PRS 101 / PAO1)).